The chain runs to 315 residues: Ribosomal RNA small subunit methyltransferase H (315 aa).

S-adenosyl-L-methionine contacts are provided by residues alanine 35–histidine 37, aspartate 55, phenylalanine 84, aspartate 105, and glutamine 112.

This sequence belongs to the methyltransferase superfamily. RsmH family.

The protein localises to the cytoplasm. The enzyme catalyses cytidine(1402) in 16S rRNA + S-adenosyl-L-methionine = N(4)-methylcytidine(1402) in 16S rRNA + S-adenosyl-L-homocysteine + H(+). Functionally, specifically methylates the N4 position of cytidine in position 1402 (C1402) of 16S rRNA. The protein is Ribosomal RNA small subunit methyltransferase H of Streptococcus agalactiae serotype III (strain NEM316).